The following is a 211-amino-acid chain: Protein-methionine-sulfoxide reductase heme-binding subunit MsrQ (211 aa).

5 helical membrane passes run W10–I30, L82–V102, P116–T136, F153–S173, and I178–F198.

The protein belongs to the MsrQ family. Heterodimer of a catalytic subunit (MsrP) and a heme-binding subunit (MsrQ). It depends on FMN as a cofactor. Requires heme b as cofactor.

Its subcellular location is the cell inner membrane. Functionally, part of the MsrPQ system that repairs oxidized periplasmic proteins containing methionine sulfoxide residues (Met-O), using respiratory chain electrons. Thus protects these proteins from oxidative-stress damage caused by reactive species of oxygen and chlorine generated by the host defense mechanisms. MsrPQ is essential for the maintenance of envelope integrity under bleach stress, rescuing a wide series of structurally unrelated periplasmic proteins from methionine oxidation, including the primary periplasmic chaperone SurA and the lipoprotein Pal. MsrQ provides electrons for reduction to the reductase catalytic subunit MsrP, using the quinone pool of the respiratory chain. The protein is Protein-methionine-sulfoxide reductase heme-binding subunit MsrQ of Escherichia coli (strain UTI89 / UPEC).